The sequence spans 341 residues: MDLSSQEYDPSQFCFPAVNNSCLKGTHHVSTQTVVYLILASAMTVTVLGNSVVIISIAHFKQLQTPTNILVMSLALADLLLGLVVMPFSMIRSVDGCWYYGETFCLLHTGFDLFLTSVSIFHLIFIAVDRHQAVCFPLQYPTRITIPVAWVMVMISWSMAAFYSYGVVYSKANLEGLEEYIASVYCMGGCTLYFNALWSVLDTLLTFFLPCSVMVGLYARIFVVAKKHIKSITEANQNENENVFKNPRRSERKAAKTLGIVVGAFILCWLPFFINSLVDPYINFSTPYALFDAFGWLGYTNSTLNPIIYGLFYPWFRKTLSLIVTLRIFEPNSSDINLFTV.

The Extracellular segment spans residues 1 to 34; sequence MDLSSQEYDPSQFCFPAVNNSCLKGTHHVSTQTV. Asn19 carries an N-linked (GlcNAc...) asparagine glycan. 2 cysteine pairs are disulfide-bonded: Cys22–Cys186 and Cys105–Cys186. Residues 35-55 form a helical membrane-spanning segment; sequence VYLILASAMTVTVLGNSVVII. Residues 56 to 68 lie on the Cytoplasmic side of the membrane; that stretch reads SIAHFKQLQTPTN. The chain crosses the membrane as a helical span at residues 69–89; sequence ILVMSLALADLLLGLVVMPFS. The Extracellular portion of the chain corresponds to 90–105; that stretch reads MIRSVDGCWYYGETFC. The helical transmembrane segment at 106 to 126 threads the bilayer; sequence LLHTGFDLFLTSVSIFHLIFI. Residues 127–147 lie on the Cytoplasmic side of the membrane; sequence AVDRHQAVCFPLQYPTRITIP. The chain crosses the membrane as a helical span at residues 148-168; it reads VAWVMVMISWSMAAFYSYGVV. Residues 169-195 are Extracellular-facing; sequence YSKANLEGLEEYIASVYCMGGCTLYFN. The chain crosses the membrane as a helical span at residues 196 to 219; the sequence is ALWSVLDTLLTFFLPCSVMVGLYA. The Cytoplasmic segment spans residues 220–257; that stretch reads RIFVVAKKHIKSITEANQNENENVFKNPRRSERKAAKT. A helical transmembrane segment spans residues 258–278; sequence LGIVVGAFILCWLPFFINSLV. Residues 279 to 292 lie on the Extracellular side of the membrane; sequence DPYINFSTPYALFD. N-linked (GlcNAc...) asparagine glycosylation occurs at Asn283. Residues 293–313 traverse the membrane as a helical segment; sequence AFGWLGYTNSTLNPIIYGLFY. Over 314 to 341 the chain is Cytoplasmic; sequence PWFRKTLSLIVTLRIFEPNSSDINLFTV.

Belongs to the G-protein coupled receptor 1 family. Expressed in olfactory epithelium (at protein level). Detected in a sparse population of olfactory sensory neurons.

It localises to the cell membrane. Olfactory receptor for medium length odd-chained diamines including cadaverine which is generated by bacterial decarboxylation of the basic amino acid lysine and contributes to the odor of decomposing tissue. Mediates pronounced innate aversion behavior to cadaverine. This Danio rerio (Zebrafish) protein is Trace amine-associated receptor 13c.